A 66-amino-acid polypeptide reads, in one-letter code: Large ribosomal subunit protein bL35 (66 aa).

The span at 1–16 (MPKQKTHRASAKRFKR) shows a compositional bias: basic residues. The segment at 1–20 (MPKQKTHRASAKRFKRTGNG) is disordered.

The protein belongs to the bacterial ribosomal protein bL35 family.

The protein is Large ribosomal subunit protein bL35 of Lactococcus lactis subsp. lactis (strain IL1403) (Streptococcus lactis).